Here is a 450-residue protein sequence, read N- to C-terminus: tRNA-aminoacylation cofactor arc1 (450 aa).

A disordered region spans residues 208–278 (QRPSVIKKDK…KEPPKAATPV (71 aa)). Composition is skewed to basic and acidic residues over residues 213 to 225 (IKKD…EGKP) and 233 to 247 (SVEK…AKKE). A compositionally biased stretch (basic residues) spans 248 to 261 (KQNKKEKKDKKDKK). Over residues 262 to 272 (DKKEKAPKEPP) the composition is skewed to basic and acidic residues. One can recognise a tRNA-binding domain in the interval 278-382 (VPSMIDFRIG…ENAEIGDRLT (105 aa)).

The protein belongs to the tRNA-aminoacylation cofactor ARC1 family. In terms of assembly, component of a yeast aminoacyl-tRNA synthase (aaRS) complex formed by methionyl-tRNA synthase, glutamyl-tRNA synthase and the tRNA aminoacylation cofactor arc1 in a stoichiometric complex. Interacts with rar1/mes1 and gus1.

It is found in the cytoplasm. Binds to tRNA and functions as a cofactor for the methionyl-tRNA synthetase (MetRS) and glutamyl-tRNA synthetase (GluRS). Forms a complex with MetRS and GluRS and increases their affinity for cognate tRNAs due to the presence of a tRNA binding domain in its middle and C-terminal part. This Schizosaccharomyces pombe (strain 972 / ATCC 24843) (Fission yeast) protein is tRNA-aminoacylation cofactor arc1.